A 449-amino-acid polypeptide reads, in one-letter code: GTP-binding protein A (449 aa).

The interval 1 to 77 is disordered; the sequence is MFNINPYKSK…LSSKTENSLS (77 aa). Low complexity-rich tracts occupy residues 8-46 and 67-77; these read KSKTTKSSSSSSASPKSSKISNVSGSGSSSSSSSSSSSS and SLSSKTENSLS. The 238-residue stretch at 149 to 386 folds into the AIG1-type G domain; it reads QNECNVLLLG…FMGHLRAKNK (238 aa). The segment at 158 to 165 is G1; the sequence is GRTGVGKS. 158-165 is a GTP binding site; it reads GRTGVGKS. Residues 183 to 187 are G2; sequence SCTQD. Residues 204–207 are G3; sequence DTPG. The interval 275-278 is G4; it reads TYAN. Residues 336-338 are G5; the sequence is ENS.

It belongs to the TRAFAC class TrmE-Era-EngA-EngB-Septin-like GTPase superfamily. AIG1/Toc34/Toc159-like paraseptin GTPase family. IAN subfamily.

The protein is GTP-binding protein A (gtpA) of Dictyostelium discoideum (Social amoeba).